The sequence spans 690 residues: Potassium-transporting ATPase ATP-binding subunit (690 aa).

The tract at residues 1–23 (MNSTSTVRQPGGPRQQRRHTPKA) is disordered. 4 helical membrane passes run 44–64 (IMVKNPVMFMVWVGTLITGML), 78–98 (AMFNGLVTVILLFTVLFANFA), 233–253 (IALTVLLAVLTLVFLIVVATL), and 268–288 (LLIALLVALIPTTIGGLLSAI). Asp321 acts as the 4-aspartylphosphate intermediate in catalysis. Residues Asp358, Glu362, 389-396 (FSARTRMS), and Lys408 contribute to the ATP site. Residues Asp531 and Asp535 each coordinate Mg(2+). 3 helical membrane-spanning segments follow: residues 601-621 (FAIIPAMFAGIGIGALNIMDL), 627-647 (AVLSALIYNALIIPALIPLAL), and 665-685 (ILVYGLGGIIVPFVAIKLIDL).

It belongs to the cation transport ATPase (P-type) (TC 3.A.3) family. Type IA subfamily. The system is composed of three essential subunits: KdpA, KdpB and KdpC.

The protein localises to the cell inner membrane. The catalysed reaction is K(+)(out) + ATP + H2O = K(+)(in) + ADP + phosphate + H(+). In terms of biological role, part of the high-affinity ATP-driven potassium transport (or Kdp) system, which catalyzes the hydrolysis of ATP coupled with the electrogenic transport of potassium into the cytoplasm. This subunit is responsible for energy coupling to the transport system and for the release of the potassium ions to the cytoplasm. In Synechocystis sp. (strain ATCC 27184 / PCC 6803 / Kazusa), this protein is Potassium-transporting ATPase ATP-binding subunit.